Reading from the N-terminus, the 390-residue chain is Phosphoprotein (390 aa).

2 positions are modified to phosphothreonine: threonine 10 and threonine 16. Positions 54 to 65 (QKNIQHPTASHQ) are enriched in polar residues. 2 disordered regions span residues 54–98 (QKNI…EPLF) and 144–183 (RTSTPVTEFKRGAGSRAQGQTIQEEGIDGNGASAGSKERS). At serine 69 the chain carries Phosphoserine. A phosphothreonine mark is found at threonine 91, threonine 150, and threonine 164. The residue at position 187 (serine 187) is a Phosphoserine. Phosphothreonine is present on threonine 249. Serine 256 is modified (phosphoserine). Threonine 257 and threonine 281 each carry phosphothreonine. Residues serine 291 and serine 293 each carry the phosphoserine modification. At threonine 297 the chain carries Phosphothreonine. Phosphoserine occurs at positions 300 and 373. The tract at residues 342–390 (AGRKVMITKMITDCVANPQMKQAFEQRLAKASTEDALNDIKKDIIRSAI) is interaction with the nucleoprotein. Position 374 is a phosphothreonine (threonine 374).

The protein belongs to the rubulavirus/avulavirus P protein family. As to quaternary structure, homotetramer. Interacts (via multimerization domain) with polymerase L; this interaction forms the polymerase L-P complex. Interacts (via N-terminus) with N0 (via Ncore); this interaction allows P to chaperon N0 to avoid N polymerization before encapsidation. Interacts (via C-terminus) with N-RNA template; this interaction positions the polymerase on the template for both transcription and replication. Interacts with host RPS6KB1 kinase; this interaction may play a role in the viral replication and transcription.

Essential cofactor of the RNA polymerase L that plays a central role in the transcription and replication by forming the polymerase complex with RNA polymerase L and recruiting L to the genomic N-RNA template for RNA synthesis. Also plays a central role in the encapsidation of nascent RNA chains by forming the encapsidation complex with the nucleocapsid protein N (N-P complex). Acts as a chaperone for newly synthesized free N protein, so-called N0, allowing encapsidation of nascent RNA chains during replication. The nucleoprotein protein N prevents excessive phosphorylation of P, which leads to down-regulation of viral transcription/ replication. Participates, together with N, in the formation of viral factories (viroplasms), which are large inclusions in the host cytoplasm where replication takes place. This chain is Phosphoprotein (P/V), found in Homo sapiens (Human).